The following is a 494-amino-acid chain: UDP-N-acetylmuramate--L-alanine ligase (494 aa).

Position 134–140 (134–140) interacts with ATP; that stretch reads GSHGKTT.

This sequence belongs to the MurCDEF family.

It is found in the cytoplasm. The catalysed reaction is UDP-N-acetyl-alpha-D-muramate + L-alanine + ATP = UDP-N-acetyl-alpha-D-muramoyl-L-alanine + ADP + phosphate + H(+). The protein operates within cell wall biogenesis; peptidoglycan biosynthesis. In terms of biological role, cell wall formation. This is UDP-N-acetylmuramate--L-alanine ligase from Prochlorococcus marinus (strain NATL1A).